The chain runs to 400 residues: Na(+)/H(+) antiporter NhaA 1 (400 aa).

Helical transmembrane passes span 25 to 45, 67 to 87, 103 to 123, 130 to 150, 159 to 179, 184 to 204, 213 to 233, 264 to 284, 303 to 323, 339 to 359, and 372 to 392; these read IVLMFCAIIAIIIANSNFSSM, ILHWINDGLMAIFFLVVGMEI, ILPVSAAIGGMVVPAIIYALF, IIGWGIPMATDIAFALGILSL, IIIFLTALAIVDDLGAIIVIA, SEISWIALILGLIIFLAIILA, WLYIIFGIALWICFLKSGVHE, VLTPLSSFIIMPIFALANSGI, IIFGLFIGKQIGIFGASYILV, LYGASVLGGIGFTMSLFVSSL, and ISIIIASILSAAFGAAIFKII.

It belongs to the NhaA Na(+)/H(+) (TC 2.A.33) antiporter family.

It is found in the cell membrane. It catalyses the reaction Na(+)(in) + 2 H(+)(out) = Na(+)(out) + 2 H(+)(in). In terms of biological role, na(+)/H(+) antiporter that extrudes sodium in exchange for external protons. This is Na(+)/H(+) antiporter NhaA 1 from Clostridium beijerinckii (strain ATCC 51743 / NCIMB 8052) (Clostridium acetobutylicum).